A 611-amino-acid chain; its full sequence is Phosphomethylpyrimidine synthase (611 aa).

Substrate is bound by residues Asn-218, Met-247, Tyr-276, His-312, 332 to 334 (SRG), 373 to 376 (DGLR), and Glu-412. His-416 contacts Zn(2+). Residue Tyr-439 participates in substrate binding. His-480 lines the Zn(2+) pocket. [4Fe-4S] cluster-binding residues include Cys-560, Cys-563, and Cys-568.

It belongs to the ThiC family. Homodimer. It depends on [4Fe-4S] cluster as a cofactor.

It carries out the reaction 5-amino-1-(5-phospho-beta-D-ribosyl)imidazole + S-adenosyl-L-methionine = 4-amino-2-methyl-5-(phosphooxymethyl)pyrimidine + CO + 5'-deoxyadenosine + formate + L-methionine + 3 H(+). Its pathway is cofactor biosynthesis; thiamine diphosphate biosynthesis. In terms of biological role, catalyzes the synthesis of the hydroxymethylpyrimidine phosphate (HMP-P) moiety of thiamine from aminoimidazole ribotide (AIR) in a radical S-adenosyl-L-methionine (SAM)-dependent reaction. This is Phosphomethylpyrimidine synthase from Caulobacter sp. (strain K31).